The sequence spans 1247 residues: Nitric oxide synthase (1247 aa).

A disordered region spans residues 13 to 33 (EVAEGRESSKANHIGEERRGY). Residue serine 146 participates in (6R)-L-erythro-5,6,7,8-tetrahydrobiopterin binding. Heme b is bound at residue cysteine 224. Residues glutamine 287, tryptophan 396, tyrosine 397, glutamate 401, and asparagine 406 each coordinate L-arginine. 2 residues coordinate (6R)-L-erythro-5,6,7,8-tetrahydrobiopterin: tryptophan 487 and phenylalanine 500. Tyrosine 515 contributes to the heme b binding site. Positions 537–557 (PRRKFNFKQIARAVKFTSKLF) are calmodulin-binding. In terms of domain architecture, Flavodoxin-like spans 567–766 (ATVLYATETG…AFRKWAPEVF (200 aa)). 712–743 (VFALGSSAYPNFCAFGKYIDNILGELGGERLM) is a binding site for FMN. Positions 795–1065 (NTVRYAPVAE…VRSAPSFHMS (271 aa)) constitute an FAD-binding FR-type domain. Residues 855-866 (YEPGDHVGIFPA) and 998-1008 (LQPRFYSISSS) each bind FAD. NADP(+) is bound by residues 1073–1091 (ILIG…WQEW) and 1170–1185 (KGHI…AEHV).

The protein belongs to the NOS family. Requires heme b as cofactor. FAD serves as cofactor. FMN is required as a cofactor.

The catalysed reaction is 2 L-arginine + 3 NADPH + 4 O2 + H(+) = 2 L-citrulline + 2 nitric oxide + 3 NADP(+) + 4 H2O. Stimulated by calcium/calmodulin. Functionally, produces nitric oxide (NO) which is a messenger molecule with diverse functions throughout the body. Nitric oxide limits plasmodium development in the midgut. This Anopheles stephensi (Indo-Pakistan malaria mosquito) protein is Nitric oxide synthase.